Reading from the N-terminus, the 678-residue chain is Beta-catenin-like protein hmp-2 (678 aa).

ARM repeat units follow at residues 153–192 (RGGPLLIFRSGGLAEIIRMLYDSLESVVHYAVTTLRNLLM), 280–319 (PSNKPALISLGCLPALYVELCTAKDERSQTAILVAMRNLS), 320–359 (DSATNEENLTQLIIKLLEIIRVANDGMTACACGTLSNLTC), 362–403 (TRNK…HCTA), and 409–448 (EEAQSELRFCQAFPVILDQLETLRTPVIKAALGVIRNSAL).

This sequence belongs to the beta-catenin family. In terms of assembly, component of a core catenin-cadherin complex consisting of hmr-1, hmp-1 and hmp-2; the complex localizes to adherens junctions. Interacts with hmr-1; the interaction is direct. May interact with hmp-1. Interacts with frk-1. In terms of tissue distribution, epidermal cells.

The protein localises to the cell junction. It is found in the adherens junction. In terms of biological role, required for cell migration during body enclosure and cell shape changes during body elongation. Plays a role in recruitment of the cadherin protein hmr-1 to adherens junctions. The chain is Beta-catenin-like protein hmp-2 (hmp-2) from Caenorhabditis elegans.